A 364-amino-acid chain; its full sequence is UDP-N-acetylglucosamine--N-acetylmuramyl-(pentapeptide) pyrophosphoryl-undecaprenol N-acetylglucosamine transferase (364 aa).

UDP-N-acetyl-alpha-D-glucosamine is bound by residues 12–14 (TGG), asparagine 124, arginine 167, serine 195, isoleucine 249, 268–273 (ALTVSE), and glutamine 294.

The protein belongs to the glycosyltransferase 28 family. MurG subfamily.

The protein resides in the cell inner membrane. It catalyses the reaction di-trans,octa-cis-undecaprenyl diphospho-N-acetyl-alpha-D-muramoyl-L-alanyl-D-glutamyl-meso-2,6-diaminopimeloyl-D-alanyl-D-alanine + UDP-N-acetyl-alpha-D-glucosamine = di-trans,octa-cis-undecaprenyl diphospho-[N-acetyl-alpha-D-glucosaminyl-(1-&gt;4)]-N-acetyl-alpha-D-muramoyl-L-alanyl-D-glutamyl-meso-2,6-diaminopimeloyl-D-alanyl-D-alanine + UDP + H(+). The protein operates within cell wall biogenesis; peptidoglycan biosynthesis. Its function is as follows. Cell wall formation. Catalyzes the transfer of a GlcNAc subunit on undecaprenyl-pyrophosphoryl-MurNAc-pentapeptide (lipid intermediate I) to form undecaprenyl-pyrophosphoryl-MurNAc-(pentapeptide)GlcNAc (lipid intermediate II). The chain is UDP-N-acetylglucosamine--N-acetylmuramyl-(pentapeptide) pyrophosphoryl-undecaprenol N-acetylglucosamine transferase from Alteromonas mediterranea (strain DSM 17117 / CIP 110805 / LMG 28347 / Deep ecotype).